The chain runs to 337 residues: Pseudouridine-5'-phosphate glycosidase (337 aa).

E26 (proton donor) is an active-site residue. Residues K87 and V107 each coordinate substrate. A Mn(2+)-binding site is contributed by D139. Residue 141–143 (SAD) participates in substrate binding. The active-site Nucleophile is K160. Low complexity predominate over residues 306-325 (SSGPQAGAGAPGAEPGPARR). Residues 306 to 337 (SSGPQAGAGAPGAEPGPARRTSPARAPSGEGW) form a disordered region.

This sequence belongs to the pseudouridine-5'-phosphate glycosidase family. Homotrimer. Mn(2+) serves as cofactor.

The enzyme catalyses D-ribose 5-phosphate + uracil = psi-UMP + H2O. Functionally, catalyzes the reversible cleavage of pseudouridine 5'-phosphate (PsiMP) to ribose 5-phosphate and uracil. Functions biologically in the cleavage direction, as part of a pseudouridine degradation pathway. The chain is Pseudouridine-5'-phosphate glycosidase from Methylobacterium nodulans (strain LMG 21967 / CNCM I-2342 / ORS 2060).